The sequence spans 121 residues: RING-box protein HRT1 (121 aa).

The disordered stretch occupies residues 1–31 (MSNEVDRMDVDEDESQNIAQSSNQSAPVETK). Phosphoserine is present on S15. Over residues 16–26 (QNIAQSSNQSA) the composition is skewed to low complexity. C55, C58, C66, C69, C81, C88, H90, H93, H95, C107, and D110 together coordinate Zn(2+). The RING-type zinc finger occupies 55 to 111 (CAICRNHIMEPCIECQPKAMTDTDNECVAAWGVCNHAFHLHCINKWIKTRDACPLDN).

This sequence belongs to the RING-box family. Component of multiple cullin-RING ligases (CRLs) composed of 4 subunits: the RING protein HRT1, a cullin, a linker protein, and one of many alternative substrate receptors. Component of SCF E3 ubiquitin ligase complexes containing the cullin CDC53, the linker protein SKP1/CBF3D, and substrate receptors containing F-box motifs like DAS1 or GRR1. Component of RTT101(MMS1) E3 ubiquitin ligase complexes containing the cullin RTT101, the linker protein MMS1, and substrate receptors belonging to a protein family described as DCAF (DDB1- and CUL4-associated factor) like MMS22. Component of CRL3 E3 ubiquitin ligase complexes containing the cullin CUL3, the linker protein ELC1, and substrate receptors containing SOCS-box motifs like ELA1. Interacts with CDC53, CUL3, RTT101, CDC4 and CDC34/UBC3.

It localises to the cytoplasm. Its subcellular location is the nucleus. It participates in protein modification; protein ubiquitination. Functionally, core component of multiple cullin-RING-based E3 ubiquitin-protein ligase complexes (CRLs), which mediate the ubiquitination of target proteins. Recruits the E2 ubiquitin-conjugating enzyme CDC34/UBC3 to the complex and brings it into close proximity to the substrate. Also stimulates CDC34/UBC3 autoubiquitination and promotes the neddylation of CDC53 and RTT101. Component of the SCF(CDC4) ubiquitin ligase required for ubiquitination of the cyclin-dependent kinase inhibitor SIC1 and for the G1-to-S phase transition. Component of the RTT101(MMS1-MMS22) ubiquitin ligase that promotes fork progression through damaged DNA or natural pause sites. Component of the CRL3(ELA1) ubiquitin ligase required for ubiquitination of RPB1, the largest subunit of RNA polymerase II (Pol II), which targets Pol II for proteasomal degradation in DNA-damaged cells. The chain is RING-box protein HRT1 (HRT1) from Saccharomyces cerevisiae (strain ATCC 204508 / S288c) (Baker's yeast).